Consider the following 274-residue polypeptide: ATP synthase subunit a (274 aa).

A run of 5 helical transmembrane segments spans residues 40–60 (FWVC…VILI), 110–130 (IFVW…LVPF), 149–169 (DVNI…FYSI), 224–244 (IFIL…SVPW), and 245–265 (AIFH…LTIV).

This sequence belongs to the ATPase A chain family. F-type ATPases have 2 components, CF(1) - the catalytic core - and CF(0) - the membrane proton channel. CF(1) has five subunits: alpha(3), beta(3), gamma(1), delta(1), epsilon(1). CF(0) has three main subunits: a(1), b(2) and c(9-12). The alpha and beta chains form an alternating ring which encloses part of the gamma chain. CF(1) is attached to CF(0) by a central stalk formed by the gamma and epsilon chains, while a peripheral stalk is formed by the delta and b chains.

It is found in the cell membrane. In terms of biological role, key component of the proton channel; it plays a direct role in the translocation of protons across the membrane. The chain is ATP synthase subunit a from Buchnera aphidicola subsp. Baizongia pistaciae (strain Bp).